The sequence spans 631 residues: 1-deoxy-D-xylulose-5-phosphate synthase (631 aa).

Thiamine diphosphate-binding positions include H72 and 113–115; that span reads GHA. Residue D144 participates in Mg(2+) binding. Thiamine diphosphate contacts are provided by residues 145–146, N174, Y287, and E370; that span reads GA. N174 lines the Mg(2+) pocket.

Belongs to the transketolase family. DXPS subfamily. Homodimer. Requires Mg(2+) as cofactor. The cofactor is thiamine diphosphate.

It catalyses the reaction D-glyceraldehyde 3-phosphate + pyruvate + H(+) = 1-deoxy-D-xylulose 5-phosphate + CO2. It functions in the pathway metabolic intermediate biosynthesis; 1-deoxy-D-xylulose 5-phosphate biosynthesis; 1-deoxy-D-xylulose 5-phosphate from D-glyceraldehyde 3-phosphate and pyruvate: step 1/1. In terms of biological role, catalyzes the acyloin condensation reaction between C atoms 2 and 3 of pyruvate and glyceraldehyde 3-phosphate to yield 1-deoxy-D-xylulose-5-phosphate (DXP). This chain is 1-deoxy-D-xylulose-5-phosphate synthase, found in Prochlorococcus marinus (strain MIT 9515).